Here is a 141-residue protein sequence, read N- to C-terminus: Protein X (141 aa).

A compositionally biased stretch (low complexity) spans 24 to 48 (QSSGPSFPRPAAGSAASSASSPSPS). The interval 24–52 (QSSGPSFPRPAAGSAASSASSPSPSDESD) is disordered. The interval 68–113 (PCCLVFTCAELRTMDSTVNFVSWHANRQLGMPSKDLWTPYIKDQLL) is mitochondrial targeting sequence.

This sequence belongs to the orthohepadnavirus protein X family. May form homodimer. May interact with host CEBPA, CFLAR, CREB1, DDB1, E4F1, HBXIP, HSPD1/HSP60, NFKBIA, POLR2E and SMAD4. Interacts with host SMC5-SMC6 complex and induces its degradation. Interacts with host TRPC4AP; leading to prevent ubiquitination of TRPC4AP. Interacts with host PLSCR1; this interaction promotes ubiquitination and degradation of HBx and impairs HBx-mediated cell proliferation. A fraction may be phosphorylated in insect cells and HepG2 cells, a human hepatoblastoma cell line. Phosphorylated in vitro by host protein kinase C or mitogen-activated protein kinase. N-acetylated in insect cells.

The protein localises to the host cytoplasm. It localises to the host nucleus. Its subcellular location is the host mitochondrion. Its function is as follows. Multifunctional protein that plays a role in silencing host antiviral defenses and promoting viral transcription. Does not seem to be essential for HBV infection. May be directly involved in development of cirrhosis and liver cancer (hepatocellular carcinoma). Most of cytosolic activities involve modulation of cytosolic calcium. The effect on apoptosis is controversial depending on the cell types in which the studies have been conducted. May induce apoptosis by localizing in mitochondria and causing loss of mitochondrial membrane potential. May also modulate apoptosis by binding host CFLAR, a key regulator of the death-inducing signaling complex (DISC). Promotes viral transcription by using the host E3 ubiquitin ligase DDB1 to target the SMC5-SMC6 complex to proteasomal degradation. This host complex would otherwise bind to viral episomal DNA, and prevents its transcription. Moderately stimulates transcription of many different viral and cellular transcription elements. Promoters and enhancers stimulated by HBx contain DNA binding sites for NF-kappa-B, AP-1, AP-2, c-EBP, ATF/CREB, or the calcium-activated factor NF-AT. The chain is Protein X from Woodchuck hepatitis B virus (isolate 7) (WHV).